We begin with the raw amino-acid sequence, 633 residues long: DEAD-box ATP-dependent RNA helicase 37 (633 aa).

The segment at 1 to 110 (MSASWADVAD…WNNRSGGWDR (110 aa)) is disordered. S2 bears the N-acetylserine mark. Over residues 11–25 (SENTGSGSSNQNSHP) the composition is skewed to polar residues. 2 stretches are compositionally biased toward gly residues: residues 68 to 80 (GGSGVGVGGGGGY) and 87 to 101 (PGSGSGYGGRGGGGW). Positions 159–187 (NTFAEIDLGEALNLNIRRCKYVKPTPVQR) match the Q motif motif. Residues 190 to 374 (IPILLEGRDL…ADFLANYIFL (185 aa)) enclose the Helicase ATP-binding domain. 203-210 (AQTGSGKT) is an ATP binding site. Residues 318 to 321 (DEAD) carry the DEAD box motif. The region spanning 401-552 (HLMDLLHAQR…EVPEWLTRYA (152 aa)) is the Helicase C-terminal domain. A disordered region spans residues 555–600 (SSFGGGKNRRSGGRFGGRDFRREGSFGSGRGGYGGGGGGYGGGGGY). The span at 580–600 (FGSGRGGYGGGGGGYGGGGGY) shows a compositional bias: gly residues.

The protein belongs to the DEAD box helicase family. DDX3/DED1 subfamily.

It catalyses the reaction ATP + H2O = ADP + phosphate + H(+). The protein is DEAD-box ATP-dependent RNA helicase 37 (RH37) of Arabidopsis thaliana (Mouse-ear cress).